The sequence spans 304 residues: Eukaryotic translation initiation factor 2 subunit alpha (304 aa).

An S1 motif domain is found at 17–88; it reads DDIVMVNVQQ…EKGYIDLSKR (72 aa). Ser-52 carries the phosphoserine; by GCN2 modification. A disordered region spans residues 283 to 304; sequence LESKELDNRSDSEDDEDESDDE. The segment covering 284–293 has biased composition (basic and acidic residues); sequence ESKELDNRSD. Phosphoserine is present on residues Ser-292 and Ser-294. Residues 294–304 show a composition bias toward acidic residues; that stretch reads SEDDEDESDDE.

This sequence belongs to the eIF-2-alpha family. In terms of assembly, eukaryotic translation initiation factor 2 eIF2 is a heterotrimeric complex composed of an alpha, a beta and a gamma subunit. The factors eIF-1, eIF-2, eIF-3, TIF5/eIF-5 and methionyl-tRNAi form a multifactor complex (MFC) that may bind to the 40S ribosome. Interacts with CDC123; the interaction is direct. Interacts with GCD1. Post-translationally, phosphorylated; phosphorylation on Ser-52 by the GCN2 protein kinase occurs in response to low amino acid, carbon, or purine availability. Phosphorylation inhibits the guanine nucleotide exchange factor activity of the eIF2B complex.

It is found in the cytoplasm. The protein resides in the cytosol. In terms of biological role, eIF-2 functions in the early steps of protein synthesis by forming a ternary complex with GTP and initiator tRNA. This complex binds to a 40S ribosomal subunit, followed by mRNA binding to form a 43S pre-initiation complex. Junction of the 60S ribosomal subunit to form the 80S initiation complex is preceded by hydrolysis of the GTP bound to eIF-2 and release of an eIF-2-GDP binary complex. In order for eIF-2 to recycle and catalyze another round of initiation, the GDP bound to eIF-2 must exchange with GTP by way of a reaction catalyzed by eIF2B. This chain is Eukaryotic translation initiation factor 2 subunit alpha, found in Saccharomyces cerevisiae (strain ATCC 204508 / S288c) (Baker's yeast).